Reading from the N-terminus, the 225-residue chain is Phosphoenolpyruvate guanylyltransferase (225 aa).

3 residues coordinate phosphoenolpyruvate: threonine 150, glycine 166, and serine 169. The segment at 167–186 (PESARGHANSGARPLNGQWP) is disordered.

The protein belongs to the CofC family.

The enzyme catalyses phosphoenolpyruvate + GTP + H(+) = enolpyruvoyl-2-diphospho-5'-guanosine + diphosphate. It participates in cofactor biosynthesis; coenzyme F420 biosynthesis. Functionally, guanylyltransferase that catalyzes the activation of phosphoenolpyruvate (PEP) as enolpyruvoyl-2-diphospho-5'-guanosine, via the condensation of PEP with GTP. It is involved in the biosynthesis of coenzyme F420, a hydride carrier cofactor. This Rhodococcus erythropolis (strain PR4 / NBRC 100887) protein is Phosphoenolpyruvate guanylyltransferase.